Consider the following 180-residue polypeptide: Probable cobalt-precorrin-6B C(15)-methyltransferase (decarboxylating) (180 aa).

Residues Thr-16, 40–44 (GCGSG), Asp-61, and Ala-89 contribute to the S-adenosyl-L-methionine site.

It belongs to the methyltransferase superfamily. Archaeal-type CbiT family.

It catalyses the reaction Co-precorrin-6B + S-adenosyl-L-methionine = Co-precorrin-7 + S-adenosyl-L-homocysteine + CO2. It participates in cofactor biosynthesis; adenosylcobalamin biosynthesis; cob(II)yrinate a,c-diamide from sirohydrochlorin (anaerobic route): step 8/10. In terms of biological role, catalyzes the methylation of C-15 in cobalt-precorrin-6B followed by the decarboxylation of C-12 to form cobalt-precorrin-7. The chain is Probable cobalt-precorrin-6B C(15)-methyltransferase (decarboxylating) from Methanococcus vannielii (strain ATCC 35089 / DSM 1224 / JCM 13029 / OCM 148 / SB).